We begin with the raw amino-acid sequence, 87 residues long: Small ribosomal subunit protein uS15c (87 aa).

This sequence belongs to the universal ribosomal protein uS15 family. In terms of assembly, part of the 30S ribosomal subunit.

The protein localises to the plastid. Its subcellular location is the chloroplast. The polypeptide is Small ribosomal subunit protein uS15c (rps15) (Illicium oligandrum (Star anise)).